The following is a 160-amino-acid chain: Transcription elongation factor GreA (160 aa).

Residues 2 to 84 (KNTVNDKILL…SKAKIIKADL (83 aa)) are a coiled coil.

The protein belongs to the GreA/GreB family.

Its function is as follows. Necessary for efficient RNA polymerase transcription elongation past template-encoded arresting sites. The arresting sites in DNA have the property of trapping a certain fraction of elongating RNA polymerases that pass through, resulting in locked ternary complexes. Cleavage of the nascent transcript by cleavage factors such as GreA or GreB allows the resumption of elongation from the new 3'terminus. GreA releases sequences of 2 to 3 nucleotides. The protein is Transcription elongation factor GreA of Mesomycoplasma hyopneumoniae (strain 232) (Mycoplasma hyopneumoniae).